We begin with the raw amino-acid sequence, 202 residues long: GTP cyclohydrolase 1 (202 aa).

Cys90, His93, and Cys163 together coordinate Zn(2+).

It belongs to the GTP cyclohydrolase I family. Homomer.

The catalysed reaction is GTP + H2O = 7,8-dihydroneopterin 3'-triphosphate + formate + H(+). The protein operates within cofactor biosynthesis; 7,8-dihydroneopterin triphosphate biosynthesis; 7,8-dihydroneopterin triphosphate from GTP: step 1/1. The protein is GTP cyclohydrolase 1 of Mycolicibacterium gilvum (strain PYR-GCK) (Mycobacterium gilvum (strain PYR-GCK)).